Consider the following 434-residue polypeptide: Glutamate-1-semialdehyde 2,1-aminomutase 2 (434 aa).

K270 carries the N6-(pyridoxal phosphate)lysine modification.

Belongs to the class-III pyridoxal-phosphate-dependent aminotransferase family. HemL subfamily. As to quaternary structure, homodimer. It depends on pyridoxal 5'-phosphate as a cofactor.

It is found in the cytoplasm. It carries out the reaction (S)-4-amino-5-oxopentanoate = 5-aminolevulinate. Its pathway is porphyrin-containing compound metabolism; protoporphyrin-IX biosynthesis; 5-aminolevulinate from L-glutamyl-tRNA(Glu): step 2/2. This Bacillus cereus (strain G9842) protein is Glutamate-1-semialdehyde 2,1-aminomutase 2.